Reading from the N-terminus, the 336-residue chain is Phenylalanine--tRNA ligase alpha subunit (336 aa).

Residue Glu259 participates in Mg(2+) binding.

The protein belongs to the class-II aminoacyl-tRNA synthetase family. Phe-tRNA synthetase alpha subunit type 1 subfamily. As to quaternary structure, tetramer of two alpha and two beta subunits. Requires Mg(2+) as cofactor.

It is found in the cytoplasm. It carries out the reaction tRNA(Phe) + L-phenylalanine + ATP = L-phenylalanyl-tRNA(Phe) + AMP + diphosphate + H(+). In Tropheryma whipplei (strain Twist) (Whipple's bacillus), this protein is Phenylalanine--tRNA ligase alpha subunit.